The following is a 154-amino-acid chain: Ribosome maturation factor RimP (154 aa).

This sequence belongs to the RimP family.

Its subcellular location is the cytoplasm. In terms of biological role, required for maturation of 30S ribosomal subunits. The polypeptide is Ribosome maturation factor RimP (Heliobacterium modesticaldum (strain ATCC 51547 / Ice1)).